We begin with the raw amino-acid sequence, 391 residues long: MVRISGFCCAMSLAERQAALLVLADGSVFHGYACGAAGTVIGEVVFNTGMTGYQEVLTDPSYCGQIVSFTYPELGNTGVNPEDEESARPQVSGLIARNVARRHSNWRADRSLPDYLQQHNIVGIYGIDTRALTQHLRSTGAMNGGISTTILDPEELWAEVKAAPSMEGLNLVDQVTTDRPYEWQTPTSQTWEFIEGPTTESLTVVAIDFGVKRNILRRLASYGCRVIVVPADTPIEEILRHEPDGVFLSNGPGDPATVKNGISTAQALLQTGLPLFGICLGHQILGSALGAQTFKLKFGHRGLNHPCGLSQQVEITGQNHGFAIAADSLGPDVEVTHLNLNDRTVAGLRHRHLPVFSVQYHPEASPGPHDSDYLFEQFVALMRDRQPTPVA.

The tract at residues 1–199 (MVRISGFCCA…TWEFIEGPTT (199 aa)) is CPSase. Residues serine 61, glycine 251, and glycine 253 each coordinate L-glutamine. One can recognise a Glutamine amidotransferase type-1 domain in the interval 203 to 388 (TVVAIDFGVK…VALMRDRQPT (186 aa)). The Nucleophile role is filled by cysteine 279. Leucine 280, glutamine 283, asparagine 319, glycine 321, and phenylalanine 322 together coordinate L-glutamine. Residues histidine 361 and glutamate 363 contribute to the active site.

This sequence belongs to the CarA family. As to quaternary structure, composed of two chains; the small (or glutamine) chain promotes the hydrolysis of glutamine to ammonia, which is used by the large (or ammonia) chain to synthesize carbamoyl phosphate. Tetramer of heterodimers (alpha,beta)4.

The catalysed reaction is hydrogencarbonate + L-glutamine + 2 ATP + H2O = carbamoyl phosphate + L-glutamate + 2 ADP + phosphate + 2 H(+). The enzyme catalyses L-glutamine + H2O = L-glutamate + NH4(+). It functions in the pathway amino-acid biosynthesis; L-arginine biosynthesis; carbamoyl phosphate from bicarbonate: step 1/1. Its pathway is pyrimidine metabolism; UMP biosynthesis via de novo pathway; (S)-dihydroorotate from bicarbonate: step 1/3. Its function is as follows. Small subunit of the glutamine-dependent carbamoyl phosphate synthetase (CPSase). CPSase catalyzes the formation of carbamoyl phosphate from the ammonia moiety of glutamine, carbonate, and phosphate donated by ATP, constituting the first step of 2 biosynthetic pathways, one leading to arginine and/or urea and the other to pyrimidine nucleotides. The small subunit (glutamine amidotransferase) binds and cleaves glutamine to supply the large subunit with the substrate ammonia. The chain is Carbamoyl phosphate synthase small chain from Synechococcus sp. (strain ATCC 27144 / PCC 6301 / SAUG 1402/1) (Anacystis nidulans).